Consider the following 1093-residue polypeptide: Leukemia inhibitory factor receptor (1093 aa).

A signal peptide spans 1 to 43; the sequence is MGAFSWWRQPSWMADNKRGRMTPSLPWLLSALTLLHLMMHVNG. At 44–829 the chain is on the extracellular side; that stretch reads LKRGVQQDLK…SMFVVTKENS (786 aa). A Fibronectin type-III 1 domain is found at 45 to 127; it reads KRGVQQDLKC…QSKFTLNEKD (83 aa). 2 disulfides stabilise this stretch: Cys54/Cys64 and Cys81/Cys89. 4 N-linked (GlcNAc...) asparagine glycosylation sites follow: Asn165, Asn200, Asn239, and Asn262. 2 disulfide bridges follow: Cys209–Cys266 and Cys337–Cys347. 5 consecutive Fibronectin type-III domains span residues 331 to 428, 431 to 530, 534 to 625, 623 to 715, and 720 to 829; these read VPQK…ERVA, VPIS…TEAT, GPDT…IPND, PNDD…IGYI, and PIVA…KENS. Asn386, Asn403, Asn422, Asn441, Asn454, and Asn477 each carry an N-linked (GlcNAc...) asparagine glycan. Cys462 and Cys507 are disulfide-bonded. Positions 515–519 match the WSXWS motif motif; sequence WSKWS. N-linked (GlcNAc...) asparagine glycans are attached at residues Asn568, Asn648, Asn659, Asn676, Asn725, and Asn783. A helical membrane pass occupies residues 830-850; the sequence is VGLIIAILIPVAVAVIVGVVT. Topologically, residues 851 to 1093 are cytoplasmic; sequence SILCYRKREW…TNFFQNKPND (243 aa). The Box 1 motif signature appears at 865–873; sequence FYPDIPNPE. Disordered regions lie at residues 908 to 941 and 1003 to 1093; these read ESRS…ENQA and LPIN…KPND. A phosphoserine mark is found at Ser923 and Ser1040. Composition is skewed to polar residues over residues 1028–1063 and 1082–1093; these read ANVN…NSRQ and SFTNFFQNKPND.

It belongs to the type I cytokine receptor family. Type 2 subfamily. Heterodimer composed of LIFR and IL6ST. The heterodimer formed by LIFR and IL6ST interacts with the complex formed by CNTF and CNTFR.

The protein resides in the cell membrane. Signal-transducing molecule. May have a common pathway with IL6ST. The soluble form inhibits the biological activity of LIF by blocking its binding to receptors on target cells. This chain is Leukemia inhibitory factor receptor (Lifr), found in Rattus norvegicus (Rat).